We begin with the raw amino-acid sequence, 688 residues long: Coiled-coil domain-containing protein 157 (688 aa).

The segment covering 143–153 has biased composition (polar residues); that stretch reads ANQGETLTSKP. Disordered stretches follow at residues 143–162, 168–189, 322–341, 366–385, and 592–688; these read ANQG…PAGS, AQLV…ERDS, QAAR…QWER, QQRE…QAEA, and QGAE…ERPT. The stretch at 288-572 forms a coiled coil; that stretch reads KLVGLLRAQL…LSKIREVAQQ (285 aa). Over residues 369–382 the composition is skewed to polar residues; sequence ESTQAVESKAQQLQ. The segment covering 671–680 has biased composition (low complexity); that stretch reads SPSSGRASPA.

The polypeptide is Coiled-coil domain-containing protein 157 (CCDC157) (Bos taurus (Bovine)).